A 660-amino-acid polypeptide reads, in one-letter code: MRLNIHKYLFIGRNKADFFSASRELGVVEFISKKCFITTEQGHRFVECLKVFDHLEAEYSLEALEFVKDESVSVEDIVSEVLTLNKEIKGLLETVKALRKEIVRVKPLGAFSSSEIAELSRKTGISLRFFYRTHKDNEDLEEDSPNVFYLSTAYNFDYYLVLGVVDLPRDRYTEIEAPRSVNELQVDLANLQREIRNRSDRLCDLYAYRREVLRGLCNYDNEQRLHQAKECCEDLFDGKVFAVAGWVIVDRIKELQSLCNRYQIYMERVPVDPDETIPTYLENKGVGMMGEDLVQIYDTPAYSDKDPSTWVFFAFVLFFSMIVNDAGYGLLFLMSSLLFSWKFRRKMKFSKHLSRMLKMTAILGLGCICWGTTTTSFFGMSFSKTSVFREYSMTHVLALKKAEYYLQMRPKAYKELTNEYPSLKAIRDPKAFLLATEIGSAGIESRYVVYDKFIDNILMELALFIGVVHLSLGMLRYLRYRYSGIGWILFMVSAYLYVPIYLGTVSLIHYLFHVPYELGGQIGYYGMFGGIGLAVVLAMIQRSWRGVEEIISVIQVFSDVLSYLRIYALGLAGAMMGATFNQMGARLPMLLGSIVILLGHSVNIILSIMGGVIHGLRLNFIEWYHYSFDGGGRPLRPLRKIVCSEDAEASGIHLDNNSIV.

The next 7 helical transmembrane spans lie at F312–F332, I362–F382, F453–G473, I485–V505, G520–I540, V560–F580, and S593–I613.

Belongs to the V-ATPase 116 kDa subunit family.

The protein resides in the cell membrane. In terms of biological role, produces ATP from ADP in the presence of a proton gradient across the membrane. This is V-type ATP synthase subunit I (atpI) from Chlamydia pneumoniae (Chlamydophila pneumoniae).